The following is a 238-amino-acid chain: Large ribosomal subunit protein uL1 (238 aa).

The protein belongs to the universal ribosomal protein uL1 family. In terms of assembly, part of the 50S ribosomal subunit.

Binds directly to 23S rRNA. The L1 stalk is quite mobile in the ribosome, and is involved in E site tRNA release. Functionally, protein L1 is also a translational repressor protein, it controls the translation of the L11 operon by binding to its mRNA. This is Large ribosomal subunit protein uL1 from Nostoc sp. (strain PCC 7120 / SAG 25.82 / UTEX 2576).